Reading from the N-terminus, the 466-residue chain is 3-isopropylmalate dehydratase large subunit (466 aa).

The [4Fe-4S] cluster site is built by Cys-347, Cys-407, and Cys-410.

Belongs to the aconitase/IPM isomerase family. LeuC type 1 subfamily. In terms of assembly, heterodimer of LeuC and LeuD. [4Fe-4S] cluster is required as a cofactor.

It catalyses the reaction (2R,3S)-3-isopropylmalate = (2S)-2-isopropylmalate. Its pathway is amino-acid biosynthesis; L-leucine biosynthesis; L-leucine from 3-methyl-2-oxobutanoate: step 2/4. In terms of biological role, catalyzes the isomerization between 2-isopropylmalate and 3-isopropylmalate, via the formation of 2-isopropylmaleate. The sequence is that of 3-isopropylmalate dehydratase large subunit from Solibacter usitatus (strain Ellin6076).